A 493-amino-acid polypeptide reads, in one-letter code: 1-aminocyclopropane-1-carboxylate synthase 1 (493 aa).

Lysine 279 bears the N6-(pyridoxal phosphate)lysine mark.

It belongs to the class-I pyridoxal-phosphate-dependent aminotransferase family. Homodimer. Pyridoxal 5'-phosphate serves as cofactor.

The enzyme catalyses S-adenosyl-L-methionine = 1-aminocyclopropane-1-carboxylate + S-methyl-5'-thioadenosine + H(+). Its pathway is alkene biosynthesis; ethylene biosynthesis via S-adenosyl-L-methionine; ethylene from S-adenosyl-L-methionine: step 1/2. Functionally, catalyzes the formation of 1-aminocyclopropane-1-carboxylate, a direct precursor of ethylene in higher plants. The polypeptide is 1-aminocyclopropane-1-carboxylate synthase 1 (ACC1A) (Cucurbita pepo (Vegetable marrow)).